Consider the following 329-residue polypeptide: Methionyl-tRNA formyltransferase (329 aa).

118–121 (SLLP) contributes to the (6S)-5,6,7,8-tetrahydrofolate binding site.

Belongs to the Fmt family.

It catalyses the reaction L-methionyl-tRNA(fMet) + (6R)-10-formyltetrahydrofolate = N-formyl-L-methionyl-tRNA(fMet) + (6S)-5,6,7,8-tetrahydrofolate + H(+). Its function is as follows. Attaches a formyl group to the free amino group of methionyl-tRNA(fMet). The formyl group appears to play a dual role in the initiator identity of N-formylmethionyl-tRNA by promoting its recognition by IF2 and preventing the misappropriation of this tRNA by the elongation apparatus. The protein is Methionyl-tRNA formyltransferase of Corynebacterium urealyticum (strain ATCC 43042 / DSM 7109).